A 138-amino-acid chain; its full sequence is Large ribosomal subunit protein uL16 (138 aa).

Over residues 1-13 (MLQPSRRKYRKEQ) the composition is skewed to basic residues. Residues 1–24 (MLQPSRRKYRKEQKGRNTGLASRG) form a disordered region.

Belongs to the universal ribosomal protein uL16 family. In terms of assembly, part of the 50S ribosomal subunit.

In terms of biological role, binds 23S rRNA and is also seen to make contacts with the A and possibly P site tRNAs. The sequence is that of Large ribosomal subunit protein uL16 from Bordetella bronchiseptica (strain ATCC BAA-588 / NCTC 13252 / RB50) (Alcaligenes bronchisepticus).